We begin with the raw amino-acid sequence, 190 residues long: dCTP deaminase, dUMP-forming (190 aa).

Residues 101-106 (KSSLGR), Asp-119, 127-129 (TLE), Gln-148, Tyr-162, and Gln-174 contribute to the dCTP site. Glu-129 serves as the catalytic Proton donor/acceptor. The disordered stretch occupies residues 163-190 (GSTRVGSKYQGQRGPTPSRSYQNFITST). Residues 171 to 190 (YQGQRGPTPSRSYQNFITST) show a composition bias toward polar residues.

It belongs to the dCTP deaminase family. Homotrimer.

It catalyses the reaction dCTP + 2 H2O = dUMP + NH4(+) + diphosphate. It functions in the pathway pyrimidine metabolism; dUMP biosynthesis; dUMP from dCTP: step 1/1. In terms of biological role, bifunctional enzyme that catalyzes both the deamination of dCTP to dUTP and the hydrolysis of dUTP to dUMP without releasing the toxic dUTP intermediate. This Mycolicibacterium paratuberculosis (strain ATCC BAA-968 / K-10) (Mycobacterium paratuberculosis) protein is dCTP deaminase, dUMP-forming.